The following is a 133-amino-acid chain: Small ribosomal subunit protein uS8 (133 aa).

Belongs to the universal ribosomal protein uS8 family. Part of the 30S ribosomal subunit.

One of the primary rRNA binding proteins, it binds directly to 16S rRNA central domain where it helps coordinate assembly of the platform of the 30S subunit. This chain is Small ribosomal subunit protein uS8, found in Aeropyrum pernix (strain ATCC 700893 / DSM 11879 / JCM 9820 / NBRC 100138 / K1).